The sequence spans 845 residues: Beta-mannosidase B (845 aa).

N-linked (GlcNAc...) asparagine glycosylation is present at N252. The active-site Proton donor is E432. N717 and N723 each carry an N-linked (GlcNAc...) asparagine glycan.

The protein belongs to the glycosyl hydrolase 2 family. Beta-mannosidase B subfamily.

The catalysed reaction is Hydrolysis of terminal, non-reducing beta-D-mannose residues in beta-D-mannosides.. The protein operates within glycan metabolism; N-glycan degradation. In terms of biological role, exoglycosidase that cleaves the single beta-linked mannose residue from the non-reducing end of beta-mannosidic oligosaccharides of various complexity and length. Prefers mannobiose over mannotriose and has no activity against polymeric mannan. Is also severely restricted by galactosyl substitutions at the +1 subsite. This chain is Beta-mannosidase B (mndB), found in Aspergillus fumigatus (strain CBS 144.89 / FGSC A1163 / CEA10) (Neosartorya fumigata).